The following is a 352-amino-acid chain: Geranylgeranyl transferase type-1 subunit beta (352 aa).

PFTB repeat units lie at residues 135–180, 187–228, 236–276, and 283–325; these read VNKK…FILD, KESA…SLLG, FKEQ…MMID, and FASI…SFGN. Residues 213 to 215 and 255 to 258 each bind geranylgeranyl diphosphate; these read HGG and RTNK. Zn(2+) contacts are provided by Asp261 and Cys263. 264–267 is a geranylgeranyl diphosphate binding site; it reads YAFW. Zn(2+) is bound at residue His313.

It belongs to the protein prenyltransferase subunit beta family. As to quaternary structure, heterodimer of an alpha and a beta subunit. Requires Zn(2+) as cofactor. Mg(2+) is required as a cofactor.

The catalysed reaction is geranylgeranyl diphosphate + L-cysteinyl-[protein] = S-geranylgeranyl-L-cysteinyl-[protein] + diphosphate. Catalyzes the transfer of a geranyl-geranyl moiety from geranyl-geranyl pyrophosphate to a cysteine at the fourth position from the C-terminus of proteins having the C-terminal sequence Cys-aliphatic-aliphatic-X. The protein is Geranylgeranyl transferase type-1 subunit beta (pggt1b) of Dictyostelium discoideum (Social amoeba).